The sequence spans 400 residues: tRNA pseudouridine synthase Pus10 (400 aa).

Residues 77–194 enclose the THUMP domain; sequence QVYVELFGSP…DGSVSVQPRR (118 aa). Tyr301 contacts substrate.

It belongs to the pseudouridine synthase Pus10 family.

It catalyses the reaction uridine(54) in tRNA = pseudouridine(54) in tRNA. The catalysed reaction is uridine(55) in tRNA = pseudouridine(55) in tRNA. Responsible for synthesis of pseudouridine from uracil-54 and uracil-55 in the psi GC loop of transfer RNAs. This is tRNA pseudouridine synthase Pus10 from Acidilobus saccharovorans (strain DSM 16705 / JCM 18335 / VKM B-2471 / 345-15).